A 72-amino-acid chain; its full sequence is Translation initiation factor IF-1 (72 aa).

Residues 1 to 72 (MSKTDVVEIE…TKGRIIWRDK (72 aa)) enclose the S1-like domain.

It belongs to the IF-1 family. As to quaternary structure, component of the 30S ribosomal translation pre-initiation complex which assembles on the 30S ribosome in the order IF-2 and IF-3, IF-1 and N-formylmethionyl-tRNA(fMet); mRNA recruitment can occur at any time during PIC assembly.

It localises to the cytoplasm. One of the essential components for the initiation of protein synthesis. Stabilizes the binding of IF-2 and IF-3 on the 30S subunit to which N-formylmethionyl-tRNA(fMet) subsequently binds. Helps modulate mRNA selection, yielding the 30S pre-initiation complex (PIC). Upon addition of the 50S ribosomal subunit IF-1, IF-2 and IF-3 are released leaving the mature 70S translation initiation complex. This chain is Translation initiation factor IF-1, found in Lachnoclostridium phytofermentans (strain ATCC 700394 / DSM 18823 / ISDg) (Clostridium phytofermentans).